Here is a 352-residue protein sequence, read N- to C-terminus: Quinolinate synthase (352 aa).

The iminosuccinate site is built by histidine 48 and serine 69. Cysteine 114 contacts [4Fe-4S] cluster. Iminosuccinate contacts are provided by residues 140 to 142 (YAN) and serine 157. Residue cysteine 201 participates in [4Fe-4S] cluster binding. Iminosuccinate is bound by residues 227-229 (HPE) and threonine 244. A [4Fe-4S] cluster-binding site is contributed by cysteine 298.

Belongs to the quinolinate synthase family. Type 1 subfamily. Requires [4Fe-4S] cluster as cofactor.

The protein localises to the cytoplasm. The catalysed reaction is iminosuccinate + dihydroxyacetone phosphate = quinolinate + phosphate + 2 H2O + H(+). It participates in cofactor biosynthesis; NAD(+) biosynthesis; quinolinate from iminoaspartate: step 1/1. Functionally, catalyzes the condensation of iminoaspartate with dihydroxyacetone phosphate to form quinolinate. The chain is Quinolinate synthase from Ectopseudomonas mendocina (strain ymp) (Pseudomonas mendocina).